The chain runs to 389 residues: NADH-quinone oxidoreductase subunit D (389 aa).

This sequence belongs to the complex I 49 kDa subunit family. In terms of assembly, NDH-1 is composed of 14 different subunits. Subunits NuoB, C, D, E, F, and G constitute the peripheral sector of the complex.

It localises to the cell inner membrane. It catalyses the reaction a quinone + NADH + 5 H(+)(in) = a quinol + NAD(+) + 4 H(+)(out). In terms of biological role, NDH-1 shuttles electrons from NADH, via FMN and iron-sulfur (Fe-S) centers, to quinones in the respiratory chain. The immediate electron acceptor for the enzyme in this species is believed to be ubiquinone. Couples the redox reaction to proton translocation (for every two electrons transferred, four hydrogen ions are translocated across the cytoplasmic membrane), and thus conserves the redox energy in a proton gradient. The chain is NADH-quinone oxidoreductase subunit D from Citrifermentans bemidjiense (strain ATCC BAA-1014 / DSM 16622 / JCM 12645 / Bem) (Geobacter bemidjiensis).